The sequence spans 202 residues: Small ribosomal subunit protein uS4 (202 aa).

Residues serine 94–leucine 157 form the S4 RNA-binding domain.

It belongs to the universal ribosomal protein uS4 family. As to quaternary structure, part of the 30S ribosomal subunit. Contacts protein S5. The interaction surface between S4 and S5 is involved in control of translational fidelity.

Functionally, one of the primary rRNA binding proteins, it binds directly to 16S rRNA where it nucleates assembly of the body of the 30S subunit. With S5 and S12 plays an important role in translational accuracy. The chain is Small ribosomal subunit protein uS4 from Ureaplasma urealyticum serovar 10 (strain ATCC 33699 / Western).